The chain runs to 379 residues: tRNA-specific 2-thiouridylase MnmA (379 aa).

ATP-binding positions include 9 to 16 (GLSGGVDS) and Met35. Residues 95-97 (NPD) are interaction with target base in tRNA. The Nucleophile role is filled by Cys100. Cys100 and Cys198 are joined by a disulfide. Gly124 is an ATP binding site. The segment at 148–150 (KDQ) is interaction with tRNA. Cys198 functions as the Cysteine persulfide intermediate in the catalytic mechanism. The interval 325–326 (RY) is interaction with tRNA.

This sequence belongs to the MnmA/TRMU family.

The protein localises to the cytoplasm. It catalyses the reaction S-sulfanyl-L-cysteinyl-[protein] + uridine(34) in tRNA + AH2 + ATP = 2-thiouridine(34) in tRNA + L-cysteinyl-[protein] + A + AMP + diphosphate + H(+). Its function is as follows. Catalyzes the 2-thiolation of uridine at the wobble position (U34) of tRNA, leading to the formation of s(2)U34. The polypeptide is tRNA-specific 2-thiouridylase MnmA (Acidovorax sp. (strain JS42)).